The primary structure comprises 264 residues: Thymidylate synthase (264 aa).

Arginine 21 lines the dUMP pocket. (6R)-5,10-methylene-5,6,7,8-tetrahydrofolate is bound at residue histidine 51. 126–127 serves as a coordination point for dUMP; sequence RR. Cysteine 146 (nucleophile) is an active-site residue. DUMP is bound by residues 166–169, asparagine 177, and 207–209; these read RSCD and HLY. Aspartate 169 serves as a coordination point for (6R)-5,10-methylene-5,6,7,8-tetrahydrofolate. Alanine 263 contacts (6R)-5,10-methylene-5,6,7,8-tetrahydrofolate.

It belongs to the thymidylate synthase family. Bacterial-type ThyA subfamily. In terms of assembly, homodimer.

It localises to the cytoplasm. It catalyses the reaction dUMP + (6R)-5,10-methylene-5,6,7,8-tetrahydrofolate = 7,8-dihydrofolate + dTMP. The protein operates within pyrimidine metabolism; dTTP biosynthesis. Its function is as follows. Catalyzes the reductive methylation of 2'-deoxyuridine-5'-monophosphate (dUMP) to 2'-deoxythymidine-5'-monophosphate (dTMP) while utilizing 5,10-methylenetetrahydrofolate (mTHF) as the methyl donor and reductant in the reaction, yielding dihydrofolate (DHF) as a by-product. This enzymatic reaction provides an intracellular de novo source of dTMP, an essential precursor for DNA biosynthesis. This is Thymidylate synthase from Aeromonas hydrophila subsp. hydrophila (strain ATCC 7966 / DSM 30187 / BCRC 13018 / CCUG 14551 / JCM 1027 / KCTC 2358 / NCIMB 9240 / NCTC 8049).